A 505-amino-acid polypeptide reads, in one-letter code: MDLLLLEKTLLGSFVAILVAILVSKLRGKRFKLPPGPLPVPVFGNWLQVGDDLNHRNLTDLAKKFGDILLLRMGQRNLVVVSSPELSKEVLHTQGVEFGSRTRNVVFDIFTGKGQDMVFTVYGEHWRKMRRIMTVPFFTNKVVQQYRYGWEEEAAQVVEDVKKNPGAATHGIVLRRRLQLMMYNNMYRIMFDRRFESEEDPLFNKLKALNGERSRLAQSFDYNYGDFIPILRPFLRGYLKICQEVKERRLQLFKDYFVDERKKLASTKNMCNEGLKCAIDHILDAQKKGEINEDNVLYIVENINVAAIETTLWSIEWGIAELVNHPEIQKKLRHELDTLLGPGHQITEPDTYKLPYLNAVVKETLRLRMAIPLLVPHMNLHDAKLGGFDIPAESKILVNAWWLANNPAHWKNPEEFRPERFLEEEAKVEANGNDFRYLPFGVGRRSCPGIILALPILGITLGRLVQNFELLPPPGQSKIDTSEKGGQFSLHILKHSTIVAKPRSF.

A helical membrane pass occupies residues 3–23 (LLLLEKTLLGSFVAILVAILV). Residues 213-218 (RSRLAQ) and A306 contribute to the (E)-cinnamate site. Position 447 (C447) interacts with heme.

The protein belongs to the cytochrome P450 family. The cofactor is heme.

The protein localises to the membrane. It carries out the reaction (E)-cinnamate + reduced [NADPH--hemoprotein reductase] + O2 = (E)-4-coumarate + oxidized [NADPH--hemoprotein reductase] + H2O + H(+). It functions in the pathway phenylpropanoid metabolism; trans-4-coumarate biosynthesis; trans-4-coumarate from trans-cinnamate: step 1/1. Functionally, catalyzes the first oxidative step of the phenylpropanoid pathway in higher plants by transforming trans-cinnamate into p-coumarate. The compounds formed by this pathway are essential components for lignification, pollination, and defense against ultraviolet light, predators and pathogens. The chain is Trans-cinnamate 4-monooxygenase (CYP73A13) from Populus tremuloides (Quaking aspen).